The primary structure comprises 196 residues: Peptidyl-tRNA hydrolase (196 aa).

His15 is a binding site for tRNA. The active-site Proton acceptor is His20. TRNA is bound by residues Tyr66, Asn68, and Asn114.

The protein belongs to the PTH family. Monomer.

The protein resides in the cytoplasm. It carries out the reaction an N-acyl-L-alpha-aminoacyl-tRNA + H2O = an N-acyl-L-amino acid + a tRNA + H(+). Functionally, hydrolyzes ribosome-free peptidyl-tRNAs (with 1 or more amino acids incorporated), which drop off the ribosome during protein synthesis, or as a result of ribosome stalling. In terms of biological role, catalyzes the release of premature peptidyl moieties from peptidyl-tRNA molecules trapped in stalled 50S ribosomal subunits, and thus maintains levels of free tRNAs and 50S ribosomes. This Polynucleobacter asymbioticus (strain DSM 18221 / CIP 109841 / QLW-P1DMWA-1) (Polynucleobacter necessarius subsp. asymbioticus) protein is Peptidyl-tRNA hydrolase.